The following is a 169-amino-acid chain: S-ribosylhomocysteine lyase (169 aa).

Fe cation-binding residues include His-54, His-58, and Cys-128.

The protein belongs to the LuxS family. As to quaternary structure, homodimer. Fe cation serves as cofactor.

It catalyses the reaction S-(5-deoxy-D-ribos-5-yl)-L-homocysteine = (S)-4,5-dihydroxypentane-2,3-dione + L-homocysteine. Involved in the synthesis of autoinducer 2 (AI-2) which is secreted by bacteria and is used to communicate both the cell density and the metabolic potential of the environment. The regulation of gene expression in response to changes in cell density is called quorum sensing. Catalyzes the transformation of S-ribosylhomocysteine (RHC) to homocysteine (HC) and 4,5-dihydroxy-2,3-pentadione (DPD). This chain is S-ribosylhomocysteine lyase, found in Psychromonas ingrahamii (strain DSM 17664 / CCUG 51855 / 37).